Consider the following 48-residue polypeptide: Gas vesicle protein A (48 aa).

This sequence belongs to the gas vesicle GvpA family. In terms of assembly, the gas vesicle shell is 2 nm thick and consists of a single layer of this protein. It forms helical ribs nearly perpendicular to the long axis of the vesicle.

The protein resides in the gas vesicle shell. Functionally, gas vesicles are hollow, gas filled proteinaceous nanostructures found in some microorganisms. During planktonic growth they allow positioning of the organism at a favorable depth for light or nutrient acquisition. GvpA forms the protein shell. The protein is Gas vesicle protein A of Spirulina sp. (strain CCAP 1475/10).